We begin with the raw amino-acid sequence, 462 residues long: Argininosuccinate lyase (462 aa).

This sequence belongs to the lyase 1 family. Argininosuccinate lyase subfamily.

The protein localises to the cytoplasm. It catalyses the reaction 2-(N(omega)-L-arginino)succinate = fumarate + L-arginine. The protein operates within amino-acid biosynthesis; L-arginine biosynthesis; L-arginine from L-ornithine and carbamoyl phosphate: step 3/3. This chain is Argininosuccinate lyase, found in Exiguobacterium sp. (strain ATCC BAA-1283 / AT1b).